The chain runs to 306 residues: D-alanine--D-alanine ligase (306 aa).

Residues 102–300 (KHVAKAAGIP…FGEFLRWMVE (199 aa)) form the ATP-grasp domain. Position 128–183 (128–183 (PMKPPYVVKPVREGSSFGVVIVKEDQSHPPQVITSSEWRYGDRVMVERYIAGRELT)) interacts with ATP. The Mg(2+) site is built by D252, E267, and N269.

This sequence belongs to the D-alanine--D-alanine ligase family. Mg(2+) serves as cofactor. Requires Mn(2+) as cofactor.

It localises to the cytoplasm. The catalysed reaction is 2 D-alanine + ATP = D-alanyl-D-alanine + ADP + phosphate + H(+). The protein operates within cell wall biogenesis; peptidoglycan biosynthesis. In terms of biological role, cell wall formation. The protein is D-alanine--D-alanine ligase of Sinorhizobium fredii (strain NBRC 101917 / NGR234).